Reading from the N-terminus, the 176-residue chain is Tubulin polymerization-promoting protein family member 3 (176 aa).

Ala2 carries the post-translational modification N-acetylalanine.

The protein belongs to the TPPP family.

The protein resides in the cytoplasm. Its subcellular location is the cytoskeleton. Functionally, regulator of microtubule dynamic that has microtubule bundling activity. Required for embryo implantation; possibly by regulating beta-catenin. Also required for decidualization via regulation of beta-catenin. The chain is Tubulin polymerization-promoting protein family member 3 (TPPP3) from Bos taurus (Bovine).